The following is an 845-amino-acid chain: Translation initiation factor IF-2 (845 aa).

2 stretches are compositionally biased toward basic and acidic residues: residues 139 to 198 and 206 to 228; these read EAKR…EKPA and FRSE…KELH. Positions 139-253 are disordered; it reads EAKRQAAEEE…PQKAAPAAKH (115 aa). The 168-residue stretch at 345–512 folds into the tr-type G domain; that stretch reads SRAAVVTIMG…AILLQAEVME (168 aa). The interval 354 to 361 is G1; it reads GHVDHGKT. 354-361 contacts GTP; that stretch reads GHVDHGKT. The segment at 379 to 383 is G2; sequence GITQH. The segment at 400-403 is G3; that stretch reads DTPG. GTP is bound by residues 400–404 and 454–457; these read DTPGH and NKID. Positions 454-457 are G4; it reads NKID. The tract at residues 490–492 is G5; that stretch reads SAK.

The protein belongs to the TRAFAC class translation factor GTPase superfamily. Classic translation factor GTPase family. IF-2 subfamily.

It localises to the cytoplasm. Functionally, one of the essential components for the initiation of protein synthesis. Protects formylmethionyl-tRNA from spontaneous hydrolysis and promotes its binding to the 30S ribosomal subunits. Also involved in the hydrolysis of GTP during the formation of the 70S ribosomal complex. This Nitrosococcus oceani (strain ATCC 19707 / BCRC 17464 / JCM 30415 / NCIMB 11848 / C-107) protein is Translation initiation factor IF-2.